We begin with the raw amino-acid sequence, 237 residues long: Cyclic-di-GMP-binding biofilm dispersal mediator protein (237 aa).

10-34 (LILGGSRGIGAAIVRRFVTDGANVR) lines the NAD(+) pocket. Residue Ser132 coordinates substrate. The active-site Proton acceptor is the Tyr146.

Belongs to the short-chain dehydrogenases/reductases (SDR) family.

Functionally, increases biofilm dispersal. Acts by binding directly to the signaling molecule cyclic-di-GMP, which decreases the intracellular concentration of cyclic-di-GMP and leads to biofilm dispersal. Also controls other biofilm-related phenotypes such as cell motility, cell size, cell aggregation and production of extracellular DNA and extracellular polysaccharides (EPS). Does not act as a phosphodiesterase. This Escherichia coli (strain K12) protein is Cyclic-di-GMP-binding biofilm dispersal mediator protein (bdcA).